Consider the following 238-residue polypeptide: Uracil-DNA glycosylase (238 aa).

Catalysis depends on Asp-72, which acts as the Proton acceptor.

This sequence belongs to the uracil-DNA glycosylase (UDG) superfamily. UNG family.

The protein resides in the cytoplasm. It catalyses the reaction Hydrolyzes single-stranded DNA or mismatched double-stranded DNA and polynucleotides, releasing free uracil.. In terms of biological role, excises uracil residues from the DNA which can arise as a result of misincorporation of dUMP residues by DNA polymerase or due to deamination of cytosine. The polypeptide is Uracil-DNA glycosylase (Chromobacterium violaceum (strain ATCC 12472 / DSM 30191 / JCM 1249 / CCUG 213 / NBRC 12614 / NCIMB 9131 / NCTC 9757 / MK)).